A 305-amino-acid polypeptide reads, in one-letter code: Transmembrane protein 74 (305 aa).

A Phosphoserine modification is found at Ser11. Residues 122–132 (QRSQRSPSAKG) are compositionally biased toward polar residues. Residues 122-143 (QRSQRSPSAKGSNHPVDLGWGN) are disordered. 2 helical membrane passes run 178-198 (FISA…SYIV) and 232-252 (VIAG…LLMM).

Belongs to the TMEM74 family.

It localises to the lysosome membrane. The protein localises to the cytoplasmic vesicle. The protein resides in the autophagosome membrane. Functionally, plays an essential role in autophagy. TMEM74-induced autophagy may involve PI3K signal transduction. The chain is Transmembrane protein 74 (Tmem74) from Mus musculus (Mouse).